The following is a 403-amino-acid chain: Vitamin D(3) 25-hydroxylase (403 aa).

Cys347 is a binding site for heme.

It belongs to the cytochrome P450 family. Heme is required as a cofactor.

The protein resides in the cytoplasm. The enzyme catalyses 5beta-cholestane-3alpha,7alpha,12alpha-triol + 6 reduced [adrenodoxin] + 3 O2 + 5 H(+) = (25R)-3alpha,7alpha,12alpha-trihydroxy-5beta-cholestan-26-oate + 6 oxidized [adrenodoxin] + 4 H2O. Its activity is regulated as follows. Activated by partially methylated beta-cyclodextrin. Functionally, hydroxylates vitamin D(3) into 25-hydroxyvitamin D(3) and 1-alpha,25-dihydroxyvitamin D(3), its physiologically active forms. It first hydroxylates the C-25 position of vitamin D(3) to form 25-hydroxyvitamin D(3), then subsequently hydroxylates the C-1-alpha position to form 1-alpha,25-dihydroxyvitamin D(3). Also displays 25-hydroxylase activity on vitamin D(2) and 7-dehydrocholesterol. May play a role in the biosynthesis of steroid metabolic intermediates. The protein is Vitamin D(3) 25-hydroxylase of Pseudonocardia autotrophica (Amycolata autotrophica).